The sequence spans 601 residues: Elongation factor 4 (601 aa).

Residues 5 to 187 (EHIRNFSIIA…AIVERLPAPE (183 aa)) enclose the tr-type G domain. GTP contacts are provided by residues 17 to 22 (DHGKST) and 134 to 137 (NKVD).

It belongs to the TRAFAC class translation factor GTPase superfamily. Classic translation factor GTPase family. LepA subfamily.

Its subcellular location is the cell inner membrane. The enzyme catalyses GTP + H2O = GDP + phosphate + H(+). Its function is as follows. Required for accurate and efficient protein synthesis under certain stress conditions. May act as a fidelity factor of the translation reaction, by catalyzing a one-codon backward translocation of tRNAs on improperly translocated ribosomes. Back-translocation proceeds from a post-translocation (POST) complex to a pre-translocation (PRE) complex, thus giving elongation factor G a second chance to translocate the tRNAs correctly. Binds to ribosomes in a GTP-dependent manner. The chain is Elongation factor 4 from Nitratidesulfovibrio vulgaris (strain DSM 19637 / Miyazaki F) (Desulfovibrio vulgaris).